Consider the following 283-residue polypeptide: NADH-ubiquinone oxidoreductase 30.4 kDa subunit, mitochondrial (283 aa).

The N-terminal 17 residues, 1–17, are a transit peptide targeting the mitochondrion; the sequence is MASKLCRSRALASALRS. The disordered stretch occupies residues 258–283; that stretch reads GAGIDRKPESFKLPTPKPETKPEEKK.

It belongs to the complex I 30 kDa subunit family. Complex I is composed of about 40 different subunits. This is a component of the iron-sulfur protein fraction.

Its subcellular location is the mitochondrion inner membrane. It catalyses the reaction a ubiquinone + NADH + 5 H(+)(in) = a ubiquinol + NAD(+) + 4 H(+)(out). Core subunit of the mitochondrial membrane respiratory chain NADH dehydrogenase (Complex I) that is believed to belong to the minimal assembly required for catalysis. Complex I functions in the transfer of electrons from NADH to the respiratory chain. The immediate electron acceptor for the enzyme is believed to be ubiquinone. This Neurospora crassa (strain ATCC 24698 / 74-OR23-1A / CBS 708.71 / DSM 1257 / FGSC 987) protein is NADH-ubiquinone oxidoreductase 30.4 kDa subunit, mitochondrial (nuo-31).